Reading from the N-terminus, the 156-residue chain is Ribosome maturation factor RimP (156 aa).

It belongs to the RimP family.

The protein resides in the cytoplasm. Required for maturation of 30S ribosomal subunits. This is Ribosome maturation factor RimP from Bacillus cereus (strain B4264).